A 222-amino-acid chain; its full sequence is Uclacyanin-3 (222 aa).

A signal peptide spans methionine 1 to alanine 21. A Phytocyanin domain is found at alanine 22 to alanine 120. The Cu cation site is built by histidine 61, cysteine 102, histidine 107, and methionine 112. The cysteines at positions 74 and 108 are disulfide-linked. The disordered stretch occupies residues alanine 121–asparagine 198. Composition is skewed to pro residues over residues proline 125–serine 172 and threonine 185–leucine 195. A lipid anchor (GPI-anchor amidated asparagine) is attached at asparagine 198. A propeptide spans alanine 199–threonine 222 (removed in mature form).

Its subcellular location is the cell membrane. Functionally, probably acts as an electron carrier involved in oxygen activation and/or lignin formation. This Arabidopsis thaliana (Mouse-ear cress) protein is Uclacyanin-3 (UCC3).